The sequence spans 149 residues: UPF0208 membrane protein PBPRA2797 (149 aa).

The next 2 helical transmembrane spans lie at 41 to 60 (FATR…QMAF) and 65 to 87 (ALPQ…LWWL).

Belongs to the UPF0208 family.

It is found in the cell inner membrane. This Photobacterium profundum (strain SS9) protein is UPF0208 membrane protein PBPRA2797.